Consider the following 412-residue polypeptide: Serine hydroxymethyltransferase (412 aa).

(6S)-5,6,7,8-tetrahydrofolate contacts are provided by residues leucine 117 and glycine 121–leucine 123. Position 226 is an N6-(pyridoxal phosphate)lysine (lysine 226).

The protein belongs to the SHMT family. Homodimer. Pyridoxal 5'-phosphate is required as a cofactor.

The protein localises to the cytoplasm. The enzyme catalyses (6R)-5,10-methylene-5,6,7,8-tetrahydrofolate + glycine + H2O = (6S)-5,6,7,8-tetrahydrofolate + L-serine. Its pathway is one-carbon metabolism; tetrahydrofolate interconversion. It functions in the pathway amino-acid biosynthesis; glycine biosynthesis; glycine from L-serine: step 1/1. Catalyzes the reversible interconversion of serine and glycine with tetrahydrofolate (THF) serving as the one-carbon carrier. This reaction serves as the major source of one-carbon groups required for the biosynthesis of purines, thymidylate, methionine, and other important biomolecules. Also exhibits THF-independent aldolase activity toward beta-hydroxyamino acids, producing glycine and aldehydes, via a retro-aldol mechanism. In Staphylococcus aureus (strain bovine RF122 / ET3-1), this protein is Serine hydroxymethyltransferase.